A 613-amino-acid chain; its full sequence is Dihydroxy-acid dehydratase (613 aa).

A Mg(2+)-binding site is contributed by aspartate 81. Cysteine 122 serves as a coordination point for [2Fe-2S] cluster. Residues aspartate 123 and lysine 124 each coordinate Mg(2+). The residue at position 124 (lysine 124) is an N6-carboxylysine. Cysteine 193 serves as a coordination point for [2Fe-2S] cluster. Position 489 (glutamate 489) interacts with Mg(2+). Serine 515 functions as the Proton acceptor in the catalytic mechanism.

It belongs to the IlvD/Edd family. As to quaternary structure, homodimer. It depends on [2Fe-2S] cluster as a cofactor. The cofactor is Mg(2+).

The catalysed reaction is (2R)-2,3-dihydroxy-3-methylbutanoate = 3-methyl-2-oxobutanoate + H2O. It carries out the reaction (2R,3R)-2,3-dihydroxy-3-methylpentanoate = (S)-3-methyl-2-oxopentanoate + H2O. It participates in amino-acid biosynthesis; L-isoleucine biosynthesis; L-isoleucine from 2-oxobutanoate: step 3/4. It functions in the pathway amino-acid biosynthesis; L-valine biosynthesis; L-valine from pyruvate: step 3/4. In terms of biological role, functions in the biosynthesis of branched-chain amino acids. Catalyzes the dehydration of (2R,3R)-2,3-dihydroxy-3-methylpentanoate (2,3-dihydroxy-3-methylvalerate) into 2-oxo-3-methylpentanoate (2-oxo-3-methylvalerate) and of (2R)-2,3-dihydroxy-3-methylbutanoate (2,3-dihydroxyisovalerate) into 2-oxo-3-methylbutanoate (2-oxoisovalerate), the penultimate precursor to L-isoleucine and L-valine, respectively. The protein is Dihydroxy-acid dehydratase of Pseudomonas putida (strain ATCC 700007 / DSM 6899 / JCM 31910 / BCRC 17059 / LMG 24140 / F1).